The following is a 198-amino-acid chain: SOSS complex subunit B2 (198 aa).

A DNA-binding region (OB) is located at residues 26–89 (IVLEIGRVTK…SMWKGCLTLY (64 aa)). Positions 114–198 (EPNPDYRGQQ…ARDPRRAFKR (85 aa)) are disordered. Composition is skewed to polar residues over residues 136-151 (STNT…QTGP) and 173-188 (LPGT…TISN).

Belongs to the SOSS-B family. SOSS-B2 subfamily. In terms of assembly, component of the SOSS complex, composed of SOSS-B (SOSS-B1/NABP2 or SOSS-B2/NABP1), SOSS-A/INTS3 and SOSS-C/INIP. SOSS complexes containing SOSS-B1/NABP2 are more abundant than complexes containing SOSS-B2/NABP1. In terms of tissue distribution, ubiquitous with high expression in the thymus.

The protein localises to the nucleus. Functionally, component of the SOSS complex, a multiprotein complex that functions downstream of the MRN complex to promote DNA repair and G2/M checkpoint. In the SOSS complex, acts as a sensor of single-stranded DNA that binds to single-stranded DNA, in particular to polypyrimidines. The SOSS complex associates with DNA lesions and influences diverse endpoints in the cellular DNA damage response including cell-cycle checkpoint activation, recombinational repair and maintenance of genomic stability. Required for efficient homologous recombination-dependent repair of double-strand breaks (DSBs) and ATM-dependent signaling pathways. The protein is SOSS complex subunit B2 (Nabp1) of Mus musculus (Mouse).